Consider the following 444-residue polypeptide: Trigger factor (444 aa).

In terms of domain architecture, PPIase FKBP-type spans 165-250; that stretch reads GDFAKFDFEG…LHEIQELKIP (86 aa).

The protein belongs to the FKBP-type PPIase family. Tig subfamily.

Its subcellular location is the cytoplasm. The catalysed reaction is [protein]-peptidylproline (omega=180) = [protein]-peptidylproline (omega=0). Involved in protein export. Acts as a chaperone by maintaining the newly synthesized protein in an open conformation. Functions as a peptidyl-prolyl cis-trans isomerase. The polypeptide is Trigger factor (Campylobacter jejuni subsp. jejuni serotype O:6 (strain 81116 / NCTC 11828)).